The sequence spans 76 residues: Small ribosomal subunit protein bS18 (76 aa).

This sequence belongs to the bacterial ribosomal protein bS18 family. As to quaternary structure, part of the 30S ribosomal subunit. Forms a tight heterodimer with protein bS6.

Functionally, binds as a heterodimer with protein bS6 to the central domain of the 16S rRNA, where it helps stabilize the platform of the 30S subunit. This is Small ribosomal subunit protein bS18 from Symbiobacterium thermophilum (strain DSM 24528 / JCM 14929 / IAM 14863 / T).